Reading from the N-terminus, the 240-residue chain is MKIKIIFSYDGSAFLGSATQPHKKGVQDALSGALSHLGIFSPLLMASRTDKGVHASYAVASVECGDYFTNLEYLQKQLNKFSHPFIHIKKIEKVKDDFEVRFDVKSREYRYIFSHASYSPFMASYVHFYPKFDLGKANELLGFFVGKKDLKFFCKSGGDNKTTLREIFIARAYAYKDFSIFHFKANGFLRGQIRLSVASVLKVLEGKMSEKELKEQIEAKKQYNHFLAPPNGLYLSRICY.

The active-site Nucleophile is the D50. Y109 contributes to the substrate binding site.

The protein belongs to the tRNA pseudouridine synthase TruA family. In terms of assembly, homodimer.

The catalysed reaction is uridine(38/39/40) in tRNA = pseudouridine(38/39/40) in tRNA. In terms of biological role, formation of pseudouridine at positions 38, 39 and 40 in the anticodon stem and loop of transfer RNAs. This chain is tRNA pseudouridine synthase A, found in Campylobacter jejuni subsp. jejuni serotype O:6 (strain 81116 / NCTC 11828).